Consider the following 130-residue polypeptide: YopE regulator (130 aa).

In terms of biological role, positive regulator of YopE. In Yersinia enterocolitica serotype O:8 / biotype 1B (strain NCTC 13174 / 8081), this protein is YopE regulator (yerA).